We begin with the raw amino-acid sequence, 57 residues long: uncharacterized protein (57 aa).

The chain crosses the membrane as a helical span at residues 21-37; sequence GTYTLVVAFVLAFLVYS.

The protein resides in the host membrane. This is an uncharacterized protein from Human herpesvirus 6B (strain Z29) (HHV-6 variant B).